The chain runs to 388 residues: Protein TsgA homolog (388 aa).

12 helical membrane-spanning segments follow: residues 11 to 31 (WISFLSYAFTGALVVVTGMIM), 50 to 70 (TFLNAGILVSIFINSWLIEII), 77 to 97 (IFSFILTIIAVIGIVLCNSIF), 101 to 121 (INMFILGLVSGITMSIGTFII), 133 to 153 (LLLLTDSFFSMSGMIFPIVTA), 160 to 180 (IIWYWSYICIGAIYLLIFLLT), 206 to 226 (VFLLSISALLYILGQLGFISW), 244 to 264 (SLVSGFWMSYMLGMWFFSFII), 268 to 288 (NLYRMFIFLTSMSTILMYCFI), 298 to 318 (YIIISLGFFSSAIYTIIITLA), 332 to 352 (LILLFGTIGTFLTFIITSPIV), and 360 to 380 (TLISSNILYGIVFFLSILIYF).

It belongs to the major facilitator superfamily. TsgA family.

Its subcellular location is the cell membrane. This is Protein TsgA homolog from Buchnera aphidicola subsp. Acyrthosiphon pisum (strain 5A).